Reading from the N-terminus, the 121-residue chain is uncharacterized protein (121 aa).

2 helical membrane passes run 16–36 (GFMV…GFAV) and 74–94 (LYIA…MKTI).

It localises to the cell membrane. This is an uncharacterized protein from Bacillus subtilis (strain 168).